Consider the following 261-residue polypeptide: Pimeloyl-[acyl-carrier protein] methyl ester esterase (261 aa).

The region spanning leucine 16–histidine 241 is the AB hydrolase-1 domain. Substrate contacts are provided by residues tryptophan 22, serine 82–leucine 83, and phenylalanine 143–glutamine 147. Serine 82 functions as the Nucleophile in the catalytic mechanism. Active-site residues include aspartate 207 and histidine 235. Histidine 235 contacts substrate.

It belongs to the AB hydrolase superfamily. Carboxylesterase BioH family. In terms of assembly, monomer.

The protein resides in the cytoplasm. It catalyses the reaction 6-carboxyhexanoyl-[ACP] methyl ester + H2O = 6-carboxyhexanoyl-[ACP] + methanol + H(+). Its pathway is cofactor biosynthesis; biotin biosynthesis. Its function is as follows. The physiological role of BioH is to remove the methyl group introduced by BioC when the pimeloyl moiety is complete. It allows to synthesize pimeloyl-ACP via the fatty acid synthetic pathway through the hydrolysis of the ester bonds of pimeloyl-ACP esters. This is Pimeloyl-[acyl-carrier protein] methyl ester esterase from Aliivibrio salmonicida (strain LFI1238) (Vibrio salmonicida (strain LFI1238)).